A 398-amino-acid polypeptide reads, in one-letter code: DNA polymerase IV (398 aa).

The UmuC domain occupies 5–187 (IFLVDMNAFF…LSIKSMHGVG (183 aa)). Mg(2+)-binding residues include aspartate 9 and aspartate 105. Glutamate 106 is an active-site residue.

It belongs to the DNA polymerase type-Y family. In terms of assembly, monomer. Mg(2+) serves as cofactor.

The protein localises to the cytoplasm. The enzyme catalyses DNA(n) + a 2'-deoxyribonucleoside 5'-triphosphate = DNA(n+1) + diphosphate. In terms of biological role, poorly processive, error-prone DNA polymerase involved in untargeted mutagenesis. Copies undamaged DNA at stalled replication forks, which arise in vivo from mismatched or misaligned primer ends. These misaligned primers can be extended by PolIV. Exhibits no 3'-5' exonuclease (proofreading) activity. May be involved in translesional synthesis, in conjunction with the beta clamp from PolIII. This chain is DNA polymerase IV, found in Alkaliphilus oremlandii (strain OhILAs) (Clostridium oremlandii (strain OhILAs)).